A 94-amino-acid polypeptide reads, in one-letter code: Small ribosomal subunit protein uS19 (94 aa).

The protein belongs to the universal ribosomal protein uS19 family.

Its function is as follows. Protein S19 forms a complex with S13 that binds strongly to the 16S ribosomal RNA. This chain is Small ribosomal subunit protein uS19, found in Hamiltonella defensa subsp. Acyrthosiphon pisum (strain 5AT).